The chain runs to 856 residues: Leucine--tRNA ligase (856 aa).

Residues 53–63 (PYPSGNLHMGH) carry the 'HIGH' region motif. The 'KMSKS' region motif lies at 622–626 (KMSKS). K625 is an ATP binding site.

This sequence belongs to the class-I aminoacyl-tRNA synthetase family.

It is found in the cytoplasm. It catalyses the reaction tRNA(Leu) + L-leucine + ATP = L-leucyl-tRNA(Leu) + AMP + diphosphate. In Prochlorococcus marinus (strain MIT 9215), this protein is Leucine--tRNA ligase.